Reading from the N-terminus, the 327-residue chain is Aspartate carbamoyltransferase catalytic subunit (327 aa).

Carbamoyl phosphate-binding residues include arginine 73 and threonine 74. Residue lysine 101 participates in L-aspartate binding. The carbamoyl phosphate site is built by arginine 123, histidine 153, and glutamine 156. L-aspartate contacts are provided by arginine 186 and arginine 241. Glycine 282 and proline 283 together coordinate carbamoyl phosphate.

The protein belongs to the aspartate/ornithine carbamoyltransferase superfamily. ATCase family. As to quaternary structure, heterododecamer (2C3:3R2) of six catalytic PyrB chains organized as two trimers (C3), and six regulatory PyrI chains organized as three dimers (R2).

It catalyses the reaction carbamoyl phosphate + L-aspartate = N-carbamoyl-L-aspartate + phosphate + H(+). It functions in the pathway pyrimidine metabolism; UMP biosynthesis via de novo pathway; (S)-dihydroorotate from bicarbonate: step 2/3. Functionally, catalyzes the condensation of carbamoyl phosphate and aspartate to form carbamoyl aspartate and inorganic phosphate, the committed step in the de novo pyrimidine nucleotide biosynthesis pathway. The chain is Aspartate carbamoyltransferase catalytic subunit from Acidithiobacillus ferrooxidans (strain ATCC 23270 / DSM 14882 / CIP 104768 / NCIMB 8455) (Ferrobacillus ferrooxidans (strain ATCC 23270)).